The following is a 340-amino-acid chain: GTP 3',8-cyclase (340 aa).

The region spanning 20-246 (RFERQYVYLR…PKALSDGPAK (227 aa)) is the Radical SAM core domain. Residue Arg-29 coordinates GTP. The [4Fe-4S] cluster site is built by Cys-36 and Cys-40. Residue Tyr-42 coordinates S-adenosyl-L-methionine. Cys-43 is a [4Fe-4S] cluster binding site. Arg-79 is a GTP binding site. Position 83 (Gly-83) interacts with S-adenosyl-L-methionine. Residue Thr-110 participates in GTP binding. S-adenosyl-L-methionine is bound at residue Ser-134. Lys-171 serves as a coordination point for GTP. Met-205 provides a ligand contact to S-adenosyl-L-methionine. [4Fe-4S] cluster-binding residues include Cys-268 and Cys-271. A GTP-binding site is contributed by 273–275 (RLR). Cys-285 lines the [4Fe-4S] cluster pocket.

Belongs to the radical SAM superfamily. MoaA family. Monomer and homodimer. [4Fe-4S] cluster is required as a cofactor.

It carries out the reaction GTP + AH2 + S-adenosyl-L-methionine = (8S)-3',8-cyclo-7,8-dihydroguanosine 5'-triphosphate + 5'-deoxyadenosine + L-methionine + A + H(+). Its pathway is cofactor biosynthesis; molybdopterin biosynthesis. In terms of biological role, catalyzes the cyclization of GTP to (8S)-3',8-cyclo-7,8-dihydroguanosine 5'-triphosphate. This chain is GTP 3',8-cyclase, found in Actinobacillus pleuropneumoniae serotype 7 (strain AP76).